The following is a 216-amino-acid chain: Flagellin B2 (216 aa).

Residues 1 to 12 (MKIKEFMSNKKG) constitute a propeptide that is removed on maturation. N-linked (GlcNAc...) asparagine glycosylation is found at asparagine 38, asparagine 72, asparagine 77, asparagine 113, asparagine 172, and asparagine 208.

The protein belongs to the archaeal flagellin family. Post-translationally, N-linked glycans consist of the 779 Da trisaccharide beta-ManNAc(Thr)-(1-4)-beta-GlcNAc3NAcA-(1-3)-beta-GlcNAc.

The protein localises to the archaeal flagellum. In terms of biological role, flagellin is the subunit protein which polymerizes to form the filaments of archaeal flagella. The protein is Flagellin B2 (flaB2) of Methanococcus voltae.